The primary structure comprises 397 residues: Major outer membrane porin, serovar L3 (397 aa).

The signal sequence occupies residues 1 to 22; that stretch reads MKKLLKSVLVFAALSSASSLQA.

It belongs to the chlamydial porin (CP) (TC 1.B.2) family. In terms of assembly, part of a disulfide cross-linked outer membrane complex (COMC) composed of the major outer membrane porin (MOMP), the small cysteine-rich protein (OmcA) and the large cysteine-rich periplasmic protein (OmcB).

Its subcellular location is the cell outer membrane. In elementary bodies (EBs, the infectious stage, which is able to survive outside the host cell) provides the structural integrity of the outer envelope through disulfide cross-links with the small cysteine-rich protein and the large cysteine-rich periplasmic protein. It has been described in publications as the Sarkosyl-insoluble COMC (Chlamydia outer membrane complex), and serves as the functional equivalent of peptidoglycan. Functionally, permits diffusion of specific solutes through the outer membrane. The chain is Major outer membrane porin, serovar L3 (ompA) from Chlamydia trachomatis.